Reading from the N-terminus, the 178-residue chain is Protein GrpE (178 aa).

Positions 1-26 (MQDQDKYAEQAASMEEPASADAPAIV) are disordered.

Belongs to the GrpE family. In terms of assembly, homodimer.

The protein localises to the cytoplasm. Functionally, participates actively in the response to hyperosmotic and heat shock by preventing the aggregation of stress-denatured proteins, in association with DnaK and GrpE. It is the nucleotide exchange factor for DnaK and may function as a thermosensor. Unfolded proteins bind initially to DnaJ; upon interaction with the DnaJ-bound protein, DnaK hydrolyzes its bound ATP, resulting in the formation of a stable complex. GrpE releases ADP from DnaK; ATP binding to DnaK triggers the release of the substrate protein, thus completing the reaction cycle. Several rounds of ATP-dependent interactions between DnaJ, DnaK and GrpE are required for fully efficient folding. The protein is Protein GrpE of Herminiimonas arsenicoxydans.